Here is a 247-residue protein sequence, read N- to C-terminus: Aliphatic sulfonates import ATP-binding protein SsuB 3 (247 aa).

In terms of domain architecture, ABC transporter spans 13–227 (VRVRGAGRAF…SVVDPEFSAL (215 aa)). 45–52 (GASGSGKS) contributes to the ATP binding site.

It belongs to the ABC transporter superfamily. Aliphatic sulfonates importer (TC 3.A.1.17.2) family. As to quaternary structure, the complex is composed of two ATP-binding proteins (SsuB), two transmembrane proteins (SsuC) and a solute-binding protein (SsuA).

The protein localises to the cell membrane. It carries out the reaction ATP + H2O + aliphatic sulfonate-[sulfonate-binding protein]Side 1 = ADP + phosphate + aliphatic sulfonateSide 2 + [sulfonate-binding protein]Side 1.. Functionally, part of the ABC transporter complex SsuABC involved in aliphatic sulfonates import. Responsible for energy coupling to the transport system. This Nocardia farcinica (strain IFM 10152) protein is Aliphatic sulfonates import ATP-binding protein SsuB 3.